The primary structure comprises 166 residues: Lithostathine-1-alpha (166 aa).

The N-terminal stretch at 1-22 is a signal peptide; the sequence is MAQTSSYFMLISCLMFLSQSQG. Residue Gln23 is modified to Pyrrolidone carboxylic acid. An O-linked (GalNAc) threonine glycan is attached at Thr27. In terms of domain architecture, C-type lectin spans 34-164; it reads ISCPEGTNAY…EDKFSFVCKF (131 aa). 3 disulfide bridges follow: Cys36/Cys47, Cys64/Cys162, and Cys137/Cys154.

In terms of processing, the composition of the O-linked carbohydrate on Thr-27 is complex and varied. In the crystallographic structure, the attached sugar appears to be N-acetylglucosamine, typical of an intracellular protein, rather than N-acetylgalactosamine. In terms of tissue distribution, in pancreatic acinar cells and, in lower levels, in brain. Enhanced expression of PSP-related transcripts and intraneuronal accumulation of PSP-like proteins is found in brain from Alzheimer disease and Down syndrome patients.

It is found in the secreted. Might act as an inhibitor of spontaneous calcium carbonate precipitation. May be associated with neuronal sprouting in brain, and with brain and pancreas regeneration. The sequence is that of Lithostathine-1-alpha (REG1A) from Homo sapiens (Human).